A 361-amino-acid chain; its full sequence is MSSGAGKVYKVLVVDDSALMRKILVEILNQSPCLEVVDTAGDPYQARDKIKALSPDVITLDVEMPRMDGLTFLRNLMRLRPMPVVMISSLTEQGAAVTLDALEYGAVDFIAKPKIDLREGIEEKAQEIIDKVITAARIPHDKLLLKQQRLQTQHQKAAVGERPQPVFATTDKLIAVGASTGGLDAIRDLLDGLNMDLPGIVIAQHIPGAFSRSFAERLDRRLPMKVEEAYDNAPITMGRVYIAPGEYHLEVVRTGAKYVCRLSEAPPVNRHRPSVDVLFDSIVSAAGANAMAALLTGMGKDGAAGLLRLHEAGAYTIAQDEASSVVWGMPGAAVKLNAADDVLPLEKIAASVKRWYAENPG.

Residues 10–127 (KVLVVDDSAL…REGIEEKAQE (118 aa)) enclose the Response regulatory domain. The residue at position 61 (Asp61) is a 4-aspartylphosphate. The 193-residue stretch at 167–359 (FATTDKLIAV…ASVKRWYAEN (193 aa)) folds into the CheB-type methylesterase domain. Active-site residues include Ser179, His205, and Asp301.

Belongs to the CheB family. In terms of processing, phosphorylated by CheA. Phosphorylation of the N-terminal regulatory domain activates the methylesterase activity.

It localises to the cytoplasm. The enzyme catalyses [protein]-L-glutamate 5-O-methyl ester + H2O = L-glutamyl-[protein] + methanol + H(+). The catalysed reaction is L-glutaminyl-[protein] + H2O = L-glutamyl-[protein] + NH4(+). Its function is as follows. Involved in chemotaxis. Part of a chemotaxis signal transduction system that modulates chemotaxis in response to various stimuli. Catalyzes the demethylation of specific methylglutamate residues introduced into the chemoreceptors (methyl-accepting chemotaxis proteins or MCP) by CheR. Also mediates the irreversible deamidation of specific glutamine residues to glutamic acid. The polypeptide is Protein-glutamate methylesterase/protein-glutamine glutaminase 1 (Hahella chejuensis (strain KCTC 2396)).